The sequence spans 432 residues: Adenylosuccinate synthetase (432 aa).

Residues 13 to 19 and 41 to 43 contribute to the GTP site; these read GDEGKGK and GHT. Asp14 (proton acceptor) is an active-site residue. Residues Asp14 and Gly41 each coordinate Mg(2+). Residues 14-17, 39-42, Thr130, Arg144, Gln225, Thr240, and Arg304 each bind IMP; these read DEGK and NAGH. Catalysis depends on His42, which acts as the Proton donor. A substrate-binding site is contributed by 300–306; that stretch reads ATTGRRR. GTP is bound by residues Arg306, 332–334, and 415–417; these read KLD and STG.

The protein belongs to the adenylosuccinate synthetase family. As to quaternary structure, homodimer. It depends on Mg(2+) as a cofactor.

It localises to the cytoplasm. The catalysed reaction is IMP + L-aspartate + GTP = N(6)-(1,2-dicarboxyethyl)-AMP + GDP + phosphate + 2 H(+). It functions in the pathway purine metabolism; AMP biosynthesis via de novo pathway; AMP from IMP: step 1/2. Functionally, plays an important role in the de novo pathway of purine nucleotide biosynthesis. Catalyzes the first committed step in the biosynthesis of AMP from IMP. This is Adenylosuccinate synthetase from Enterobacter sp. (strain 638).